Here is a 327-residue protein sequence, read N- to C-terminus: Petrobactin synthase (327 aa).

It catalyses the reaction N(8)-citryl-spermidine + 3,4-dihydroxybenzoyl-[aryl-carrier protein] = N(1)-(3,4-dihydroxybenzoyl)-N(8)-citryl-spermidine + holo-[aryl-carrier protein] + H(+). The catalysed reaction is N(8),N'(8)-citryl-bis(spermidine) + 3,4-dihydroxybenzoyl-[aryl-carrier protein] = N(1)-(3,4-dihydroxybenzoyl)-N(8),N'(8)-citryl-bis(spermidine) + holo-[aryl-carrier protein] + H(+). It carries out the reaction N(1)-(3,4-dihydroxybenzoyl)-N(8),N'(8)-citryl-bis(spermidine) + 3,4-dihydroxybenzoyl-[aryl-carrier protein] = petrobactin + holo-[aryl-carrier protein] + H(+). It participates in siderophore biosynthesis; petrobactin biosynthesis. Involved in the biosynthesis of petrobactin, a catecholate siderophore that functions in both iron acquisition and virulence. Transfers the activated 3,4-dihydroxybenzoate (3,4-DHBA) moiety from 3,4-DHBA-loaded AsbD to different receipient molecules, including N-citryl-spermidine, N8,N'8-citryl-bis(spermidine) and N1-(3,4-dihydroxybenzoyl)-N8,N'8-citryl-bis(spermidine). Also catalyzes the transfer of the activated 3,4-DHBA moiety from 3,4-DHBA-loaded AsbD to spermidine to generate DHB-spermidine (DHB-SP). This Bacillus anthracis protein is Petrobactin synthase.